A 1706-amino-acid chain; its full sequence is PR domain zinc finger protein 2 (1706 aa).

Positions 27 to 140 (EEVRLFPSAV…PGEELLVWYN (114 aa)) constitute an SET domain. A disordered region spans residues 154-342 (ERASARSKRS…TPPPHTPRAR (189 aa)). Basic residues predominate over residues 158-183 (ARSKRSSPKSRRGKKKSHENKNKGIR). The span at 185 to 199 (HPTQLKASELDSTFA) shows a compositional bias: polar residues. The segment covering 258 to 294 (TDCEVNDVEEEELEEEEELEEEEEEELGEDGVEEADM) has biased composition (acidic residues). Basic and acidic residues predominate over residues 299–313 (SAKEPEIRCEEKPED). C2H2-type zinc fingers lie at residues 355–377 (FPCQ…MHIH) and 385–407 (FKCK…ERRH). Disordered regions lie at residues 400 to 446 (RRRH…QLGQ), 492 to 542 (RRHQ…EEEG), and 618 to 655 (LLKD…STAP). Ser-416 carries the phosphoserine modification. Over residues 427-439 (DGKGENVTSKDES) the composition is skewed to basic and acidic residues. The C2H2-type 3 zinc finger occupies 476–499 (HPCKYCKKVFGTHTNMRRHQRRVH). Ser-637 carries the post-translational modification Phosphoserine. Glycyl lysine isopeptide (Lys-Gly) (interchain with G-Cter in SUMO2) cross-links involve residues Lys-645, Lys-684, and Lys-686. 3 disordered regions span residues 724–794 (TSSR…SPPC), 823–1075 (SGVK…SSVV), and 1088–1112 (VTFK…AGGQ). Positions 733-743 (SSPPSSPQHSP) are enriched in low complexity. Ser-738 carries the post-translational modification Phosphoserine. A Glycyl lysine isopeptide (Lys-Gly) (interchain with G-Cter in SUMO2) cross-link involves residue Lys-769. Phosphoserine is present on residues Ser-776, Ser-780, and Ser-791. Over residues 823 to 832 (SGVKQKSEGT) the composition is skewed to polar residues. Positions 846-863 (SVHKKPCDSEGKEFKENH) are enriched in basic and acidic residues. Glycyl lysine isopeptide (Lys-Gly) (interchain with G-Cter in SUMO2) cross-links involve residues Lys-860 and Lys-870. Polar residues-rich tracts occupy residues 891 to 912 (SLPT…SPDT) and 943 to 952 (LQTASLSSGQ). A compositionally biased stretch (pro residues) spans 962 to 983 (PSSPPPCPPVLTVATPPPPLLP). Residues 993 to 1009 (DASPQQCPSPFSNTTAQ) are compositionally biased toward polar residues. Over residues 1010–1019 (SPLPILSPTV) the composition is skewed to low complexity. Residues 1020 to 1030 (SPSPSPIPPVE) show a composition bias toward pro residues. Over residues 1034 to 1062 (SAASPGPPTLSSSSSSSSSFPSSSCSSTS) the composition is skewed to low complexity. Basic and acidic residues predominate over residues 1091–1106 (KQEESESEGLKPKEEA). 3 C2H2-type zinc fingers span residues 1123–1145 (FICN…LSVH), 1151–1174 (FKCE…FLLH), and 1180–1203 (FVCS…RDLH). Glycyl lysine isopeptide (Lys-Gly) (interchain with G-Cter in SUMO2) cross-links involve residues Lys-1136 and Lys-1140. The segment covering 1218–1227 (LRPQNFTDPS) has biased composition (polar residues). Residues 1218-1251 (LRPQNFTDPSKANVEHMPSLPEEPLETSREEELN) form a disordered region. A Glycyl lysine isopeptide (Lys-Gly) (interchain with G-Cter in SUMO2) cross-link involves residue Lys-1269. Residues 1321 to 1343 (IRCTKCGKGVDNMPELHKHILAC) form a C2H2-type 7; atypical zinc finger. A C2H2-type 8; atypical zinc finger spans residues 1443 to 1465 (HICPYCDREFTYIGSLNKHAAFS). The disordered stretch occupies residues 1466–1563 (CPKKPLSPSK…KKASSSSLRN (98 aa)). Residues 1474–1486 (SKRKVSHSSKKGG) show a composition bias toward basic residues. Low complexity predominate over residues 1487 to 1498 (HASSSSSDRNSS). A compositionally biased stretch (polar residues) spans 1528–1544 (GPAQASLPSSSFRSRQN). Positions 1548-1563 (AASVKSKKASSSSLRN) are enriched in low complexity.

The protein belongs to the class V-like SAM-binding methyltransferase superfamily. In terms of assembly, binds to the retinoblastoma protein (RB). Interacts with GATA3.

The protein resides in the nucleus. The catalysed reaction is L-lysyl-[histone] + S-adenosyl-L-methionine = N(6)-methyl-L-lysyl-[histone] + S-adenosyl-L-homocysteine + H(+). It carries out the reaction L-lysyl(9)-[histone H3] + 3 S-adenosyl-L-methionine = N(6),N(6),N(6)-trimethyl-L-lysyl(9)-[histone H3] + 3 S-adenosyl-L-homocysteine + 3 H(+). Its function is as follows. S-adenosyl-L-methionine-dependent histone methyltransferase that specifically methylates 'Lys-9' of histone H3. May function as a DNA-binding transcription factor. Binds to the macrophage-specific TPA-responsive element (MTE) of the HMOX1 (heme oxygenase 1) gene and may act as a transcriptional activator of this gene. The sequence is that of PR domain zinc finger protein 2 (Prdm2) from Rattus norvegicus (Rat).